Consider the following 784-residue polypeptide: Receptor-like protein 38 (784 aa).

A signal peptide spans 1 to 30 (MIRSQSYCFLGITITIYFFFCLLPLPNTFA). Over 31–752 (SPPTQSLCRH…SELEEPVLNW (722 aa)) the chain is Extracellular. LRR repeat units follow at residues 109-133 (LQHL…IENL), 134-157 (SHLT…IGNL), 158-180 (NQLE…SFAN), 182-204 (TKLS…LSNL), and 205-227 (TSLA…DLSG). Asn-132 is a glycosylation site (N-linked (GlcNAc...) asparagine). N-linked (GlcNAc...) asparagine glycosylation is found at Asn-180, Asn-193, and Asn-203. The stretch at 228 to 251 (LHNLEQIFGNENSFVGLFPASLLK) is one LRR 6; degenerate repeat. 10 LRR repeats span residues 252–276 (ISSL…NTSS), 278–301 (SRLT…LSKL), 302–324 (VNLE…SISK), 326–349 (VNLT…IWKP), 351–373 (NLQS…EVVN), 374–400 (GAKL…NFRF), 402–422 (FFLD…LKNS), 423–446 (TDFN…CMDS), 447–470 (TMLR…LMNC), and 472–496 (DMEF…SRKS). An N-linked (GlcNAc...) asparagine glycan is attached at Asn-273. A glycan (N-linked (GlcNAc...) asparagine) is linked at Asn-327. N-linked (GlcNAc...) asparagine glycosylation is found at Asn-421 and Asn-432. An LRR 17; degenerate repeat occupies 497 to 518 (LMVLVLRSNAFYGPVYNSTTYL). N-linked (GlcNAc...) asparagine glycosylation is found at Asn-513, Asn-544, and Asn-562. One copy of the LRR 18 repeat lies at 520–544 (FPRLSIIDISNNDFVGSLPQDYFAN). 4 LRR repeats span residues 608–632 (FRGF…IGLL), 633–656 (SELL…LANI), 657–680 (TNLE…LGNL), and 682–705 (FLSN…QFGT). Asn-639, Asn-655, Asn-668, Asn-679, Asn-687, and Asn-707 each carry an N-linked (GlcNAc...) asparagine glycan. A helical membrane pass occupies residues 753–773 (IAAAIAFGPGVFCGFVIGHIF). The Cytoplasmic portion of the chain corresponds to 774-784 (TSYKHLWFIAR).

It belongs to the RLP family.

It localises to the cell membrane. The polypeptide is Receptor-like protein 38 (Arabidopsis thaliana (Mouse-ear cress)).